A 466-amino-acid chain; its full sequence is MSEQKSSNQMWGGRFASGPDAIMEEINASIGFDRKLYAQDIQGSLAHAAMLAKTGIIAAEDHKQIENGLKTIRKEIEEGKFTFSRKLEDIHMNIEARLAELIGPAAGRLHTARSRNDQVAVDFRLWVKQELEKTAAALKNLIEAFLERAEEHAATVMPGFTHLQTAQPVTFGHHCMAYVEMFGRDLSRVRDAIERMDESPLGAAALAGTGFPIDRHMTAKALGFREPTRNSLDSVSDRDYALEFLSLAAICAGHLSRLAEEIVIWSTPQFNFVRLSDAFSTGSSIMPQKKNPDAAELVRAKTGRINGSLVALLTIMKGLPLAYSKDMQEDKEQVFDAAENLELAIAAMAGMVRDLTVNVAAMKKAAGSGYSTATDLADWLVRTLGLPFREAHHVTGRAVALAESRKVDLAKLSLEELQSINPAITAEVFGYLTVEKSVKSRQSFGGTAPQEVRRQIRYWKKRIAKA.

This sequence belongs to the lyase 1 family. Argininosuccinate lyase subfamily.

The protein resides in the cytoplasm. The catalysed reaction is 2-(N(omega)-L-arginino)succinate = fumarate + L-arginine. It participates in amino-acid biosynthesis; L-arginine biosynthesis; L-arginine from L-ornithine and carbamoyl phosphate: step 3/3. This Brucella canis (strain ATCC 23365 / NCTC 10854 / RM-666) protein is Argininosuccinate lyase.